The chain runs to 474 residues: Protein nucleotidyltransferase YdiU (474 aa).

The ATP site is built by glycine 89, glycine 91, arginine 92, lysine 112, aspartate 124, glycine 125, arginine 175, and arginine 182. The active-site Proton acceptor is aspartate 256. Mg(2+) contacts are provided by asparagine 257 and aspartate 266. Aspartate 266 serves as a coordination point for ATP.

It belongs to the SELO family. Requires Mg(2+) as cofactor. Mn(2+) is required as a cofactor.

It catalyses the reaction L-seryl-[protein] + ATP = 3-O-(5'-adenylyl)-L-seryl-[protein] + diphosphate. It carries out the reaction L-threonyl-[protein] + ATP = 3-O-(5'-adenylyl)-L-threonyl-[protein] + diphosphate. The catalysed reaction is L-tyrosyl-[protein] + ATP = O-(5'-adenylyl)-L-tyrosyl-[protein] + diphosphate. The enzyme catalyses L-histidyl-[protein] + UTP = N(tele)-(5'-uridylyl)-L-histidyl-[protein] + diphosphate. It catalyses the reaction L-seryl-[protein] + UTP = O-(5'-uridylyl)-L-seryl-[protein] + diphosphate. It carries out the reaction L-tyrosyl-[protein] + UTP = O-(5'-uridylyl)-L-tyrosyl-[protein] + diphosphate. Nucleotidyltransferase involved in the post-translational modification of proteins. It can catalyze the addition of adenosine monophosphate (AMP) or uridine monophosphate (UMP) to a protein, resulting in modifications known as AMPylation and UMPylation. The protein is Protein nucleotidyltransferase YdiU of Corynebacterium glutamicum (strain R).